A 251-amino-acid polypeptide reads, in one-letter code: 5-oxoprolinase subunit A (251 aa).

The protein belongs to the LamB/PxpA family. In terms of assembly, forms a complex composed of PxpA, PxpB and PxpC.

The enzyme catalyses 5-oxo-L-proline + ATP + 2 H2O = L-glutamate + ADP + phosphate + H(+). Catalyzes the cleavage of 5-oxoproline to form L-glutamate coupled to the hydrolysis of ATP to ADP and inorganic phosphate. The sequence is that of 5-oxoprolinase subunit A from Vibrio parahaemolyticus serotype O3:K6 (strain RIMD 2210633).